The chain runs to 1157 residues: Cyclin-dependent kinase 12 (1157 aa).

Positions 15 to 540 (SDVSSEDFSD…RSPTSRDLKH (526 aa)) are disordered. The span at 18–32 (SSEDFSDQEAGDLDA) shows a compositional bias: acidic residues. The span at 55–76 (GRLDAKPDKEGYDNYRSRRAED) shows a compositional bias: basic and acidic residues. Over residues 85–94 (SRQTSSSEAT) the composition is skewed to polar residues. Thr-106 is modified (phosphothreonine). Residues 134–162 (RQKRKKQKKEKHKHKSKKKSKKRKKKRAK) show a composition bias toward basic residues. Over residues 163–176 (SYSSIDSMSDNDIN) the composition is skewed to low complexity. The residue at position 184 (Thr-184) is a Phosphothreonine. Over residues 189–215 (PSKSNERTVSAAPSSFTPHNLKESSSP) the composition is skewed to polar residues. Residues Ser-190 and Ser-192 each carry the phosphoserine modification. Residue Thr-217 is modified to Phosphothreonine. Residues 224 to 255 (PNTNSNYYGESSLETANSALGSNLQVTVTNKQ) show a composition bias toward polar residues. Over residues 256-281 (SISNRLRSPPPSSRSSGNGPRFGNSP) the composition is skewed to low complexity. Ser-280 carries the post-translational modification Phosphoserine. The residue at position 283 (Thr-283) is a Phosphothreonine. 3 positions are modified to phosphoserine: Ser-291, Ser-301, and Ser-314. The span at 315 to 332 (PHKEDVSAHHRSSHDHGY) shows a compositional bias: basic and acidic residues. Ser-353 is modified (phosphoserine). At Thr-365 the chain carries Phosphothreonine. Over residues 392-403 (GKYERYSRDRYS) the composition is skewed to basic and acidic residues. Residues 408-422 (RSPSVQHSRSRQSPS) show a composition bias toward low complexity. Polar residues predominate over residues 444 to 468 (TTVSSTPSHTTRTSKRASGTGTSGD). The span at 473 to 484 (SPRTSSRYMESS) shows a compositional bias: low complexity. 2 positions are modified to phosphoserine: Ser-487 and Ser-492. The span at 495 to 508 (HHYHHRRSPRMRQR) shows a compositional bias: basic residues. Residues 518 to 533 (PSSASSESSASRSRSP) are compositionally biased toward low complexity. Ser-553 bears the Phosphoserine mark. 2 disordered regions span residues 574–661 (ERQE…ADVP) and 675–782 (PFSA…QRPV). Residues 586 to 603 (GALTINDNSSSVDGNTPN) show a composition bias toward polar residues. Positions 609 to 623 (SAPGSGTPAAASTTS) are enriched in low complexity. 2 stretches are compositionally biased toward polar residues: residues 644–656 (NKQN…NPAS) and 721–731 (VTSSGSANKSV). 4 positions are modified to phosphoserine: Ser-730, Ser-743, Ser-747, and Ser-755. Residues 746 to 760 (LSGDDDVIDSPEDFD) show a composition bias toward acidic residues. A Protein kinase domain is found at 804 to 1098 (FEMIAQIGEG…AEDALRSPWL (295 aa)). ATP contacts are provided by residues 810–818 (IGEGTYGQV), Lys-833, and 891–896 (EYMDHD). Asp-936 functions as the Proton acceptor in the catalytic mechanism. His-1118 is a binding site for ATP.

It belongs to the protein kinase superfamily. CMGC Ser/Thr protein kinase family. CDC2/CDKX subfamily. Interacts with cyclin CycK.

The protein resides in the nucleus. It is found in the chromosome. It catalyses the reaction [DNA-directed RNA polymerase] + ATP = phospho-[DNA-directed RNA polymerase] + ADP + H(+). The enzyme catalyses L-seryl-[protein] + ATP = O-phospho-L-seryl-[protein] + ADP + H(+). The catalysed reaction is L-threonyl-[protein] + ATP = O-phospho-L-threonyl-[protein] + ADP + H(+). Cyclin-dependent kinase which displays CTD kinase activity: hyperphosphorylates the C-terminal heptapeptide repeat domain (CTD) of the largest RNA polymerase II subunit, thereby acting as a key regulator of transcription elongation. The polypeptide is Cyclin-dependent kinase 12 (Cdk12) (Drosophila melanogaster (Fruit fly)).